The sequence spans 500 residues: MNSFPWLTIIVVFPILTGSLIFLLPHRGNKVMKWYTLCICILELLLTTYTFCYHFQLDDPLTQLTENYKWIHFFDFYWRLGIDGLSIGPILLTGFITTLATLAAWPVTRDAQLFHFLMLAMYSGQIGSFSSRDLLLFFLMWEFELIPVYLLLSMWGGKKRLYSATKFILYTAGGSIFLLIGVLGIGLYGSNEPTLNFETLANQSYPVALEVIFYVGFLIAFAVKLPIIPLHTWLPDTHGEAHYSTCMLLAGILLKMGAYGLVRINMELLPHAHCLFSPGLIIVGAIQIIYAASTSPGQLNLKKRIAYSSISHMGFIIIGIGSLSDTGLNGAILQIISHGFIGAALFFLAGTSYDRIRLLYLDEMGGMAIPLPKLFTMLSILSMASLALPGLSGFVAELLVFFGIITSQKYLLMPKILIAFLMAIGMILTPIYSLSMLRQMFYGYKLFNVPNYYFFDSGPRELFVSISLLLPIIGIGIYPDFVLSLSVEKVEAIISHFFFR.

Helical transmembrane passes span 4 to 24, 37 to 57, 87 to 107, 111 to 131, 134 to 154, 167 to 187, 208 to 228, 242 to 262, 272 to 292, 305 to 325, 330 to 350, 386 to 406, 416 to 436, and 462 to 482; these read FPWLTIIVVFPILTGSLIFLL, LCICILELLLTTYTFCYHFQL, IGPILLTGFITTLATLAAWPV, AQLFHFLMLAMYSGQIGSFSS, LLLFFLMWEFELIPVYLLLSM, FILYTAGGSIFLLIGVLGIGL, ALEVIFYVGFLIAFAVKLPII, HYSTCMLLAGILLKMGAYGLV, AHCLFSPGLIIVGAIQIIYAA, IAYSSISHMGFIIIGIGSLSD, GAILQIISHGFIGAALFFLAG, LALPGLSGFVAELLVFFGIIT, ILIAFLMAIGMILTPIYSLSM, and LFVSISLLLPIIGIGIYPDFV.

Belongs to the complex I subunit 4 family.

It localises to the plastid. The protein resides in the chloroplast thylakoid membrane. The enzyme catalyses a plastoquinone + NADH + (n+1) H(+)(in) = a plastoquinol + NAD(+) + n H(+)(out). It carries out the reaction a plastoquinone + NADPH + (n+1) H(+)(in) = a plastoquinol + NADP(+) + n H(+)(out). The sequence is that of NAD(P)H-quinone oxidoreductase chain 4, chloroplastic from Oenothera parviflora (Small-flowered evening primrose).